Reading from the N-terminus, the 852-residue chain is Polyphosphate kinase (852 aa).

2 disordered regions span residues 1–36 and 58–82; these read MATG…DRPI and SHDP…SRRK. Basic and acidic residues predominate over residues 20–36; that stretch reads VARDHPGCGPHRLDRPI. The segment covering 58–67 has biased composition (polar residues); the sequence is SHDPAPSQSV. Position 131 (N131) interacts with ATP. A disordered region spans residues 251 to 303; that stretch reads GDEIGPQRTPPPSDSLDNRVPSNLKRNSDTANQQPTPAENISAPEDGAEQTEP. The segment at 258–303 is insert; the sequence is RTPPPSDSLDNRVPSNLKRNSDTANQQPTPAENISAPEDGAEQTEP. Residues 270–289 are compositionally biased toward polar residues; that stretch reads VPSNLKRNSDTANQQPTPAE. Positions 524 and 554 each coordinate Mg(2+). The Phosphohistidine intermediate role is filled by H584. ATP contacts are provided by Y617, R713, and H741.

Belongs to the polyphosphate kinase 1 (PPK1) family. Mg(2+) serves as cofactor. Post-translationally, an intermediate of this reaction is the autophosphorylated ppk in which a phosphate is covalently linked to a histidine residue through a N-P bond.

It carries out the reaction [phosphate](n) + ATP = [phosphate](n+1) + ADP. In terms of biological role, catalyzes the reversible transfer of the terminal phosphate of ATP to form a long-chain polyphosphate (polyP). The polypeptide is Polyphosphate kinase (Rhodopirellula baltica (strain DSM 10527 / NCIMB 13988 / SH1)).